A 422-amino-acid polypeptide reads, in one-letter code: Glutamate 2,3-aminomutase (422 aa).

The region spanning 150 to 371 is the Radical SAM core domain; it reads RRYPDRLIIN…AIPTYIVNAP (222 aa). [4Fe-4S] cluster-binding residues include Cys164, Cys168, and Cys171. Lys376 is subject to N6-(pyridoxal phosphate)lysine.

Belongs to the radical SAM superfamily. Pyridoxal 5'-phosphate serves as cofactor. [4Fe-4S] cluster is required as a cofactor.

The catalysed reaction is L-glutamate = 3-aminopentanedioate. Catalyzes the interconversion of L-glutamate and L-beta-glutamate. Does not have L-lysine 2,3-aminomutase activity. This is Glutamate 2,3-aminomutase (eam) from Clostridioides difficile (strain 630) (Peptoclostridium difficile).